The sequence spans 156 residues: MAENPIYGPFFGVMGAASAIIFSALGAAYGTAKSGTGIAAMSVMRPELIMKSIIPVVMAGIIAIYGLVVAVLIAGSLDSPSNNYTLYRGFIHLGAGLAVGFSGLAAGFAIGIVGDAGVRGTAQQPRLFVGMILILIFAEVLGLYGLIVAIYLYTKQ.

Residues methionine 1 to tyrosine 7 lie on the Lumenal side of the membrane. Residues glycine 8–glycine 30 form a helical membrane-spanning segment. Residues threonine 31–serine 52 lie on the Cytoplasmic side of the membrane. The chain crosses the membrane as a helical span at residues isoleucine 53–isoleucine 73. Residues alanine 74 to histidine 92 are Lumenal-facing. The helical transmembrane segment at leucine 93 to glycine 114 threads the bilayer. Residues aspartate 115–arginine 126 are Cytoplasmic-facing. The helical transmembrane segment at leucine 127 to leucine 152 threads the bilayer. Residues tyrosine 153 to glutamine 156 are Lumenal-facing.

It belongs to the V-ATPase proteolipid subunit family. In terms of assembly, V-ATPase is a heteromultimeric enzyme made up of two complexes: the ATP-hydrolytic V1 complex and the proton translocation V0 complex. The V1 complex consists of three catalytic AB heterodimers that form a heterohexamer, three peripheral stalks each consisting of EG heterodimers, one central rotor including subunits D and F, and the regulatory subunits C and H. The proton translocation complex V0 consists of the proton transport subunit a, a ring of proteolipid subunits c9c'', rotary subunit d, subunits e and f, and the accessory subunits VhaAC45 and ATP6AP2.

Its subcellular location is the membrane. Its function is as follows. Proton-conducting pore forming subunit of the V0 complex of vacuolar(H+)-ATPase (V-ATPase), a multisubunit enzyme composed of a peripheral complex (V1) that hydrolyzes ATP and a membrane integral complex (V0) that translocates protons. V-ATPase is responsible for acidifying and maintaining the pH of intracellular compartments and in some cell types, is targeted to the plasma membrane, where it is responsible for acidifying the extracellular environment. The sequence is that of V-type proton ATPase 16 kDa proteolipid subunit c (VHA16) from Manduca sexta (Tobacco hawkmoth).